The primary structure comprises 186 residues: Ribosome-recycling factor (186 aa).

The protein belongs to the RRF family.

It localises to the cytoplasm. Its function is as follows. Responsible for the release of ribosomes from messenger RNA at the termination of protein biosynthesis. May increase the efficiency of translation by recycling ribosomes from one round of translation to another. The sequence is that of Ribosome-recycling factor from Azorhizobium caulinodans (strain ATCC 43989 / DSM 5975 / JCM 20966 / LMG 6465 / NBRC 14845 / NCIMB 13405 / ORS 571).